Consider the following 97-residue polypeptide: Co-chaperonin GroES (97 aa).

It belongs to the GroES chaperonin family. Heptamer of 7 subunits arranged in a ring. Interacts with the chaperonin GroEL.

The protein localises to the cytoplasm. Functionally, together with the chaperonin GroEL, plays an essential role in assisting protein folding. The GroEL-GroES system forms a nano-cage that allows encapsulation of the non-native substrate proteins and provides a physical environment optimized to promote and accelerate protein folding. GroES binds to the apical surface of the GroEL ring, thereby capping the opening of the GroEL channel. This chain is Co-chaperonin GroES, found in Buchnera aphidicola subsp. Geoica urticularia.